A 306-amino-acid chain; its full sequence is Acetyl-coenzyme A carboxylase carboxyl transferase subunit beta (306 aa).

The CoA carboxyltransferase N-terminal domain occupies L27–P296. Positions 31, 34, 50, and 53 each coordinate Zn(2+). The segment at C31–C53 adopts a C4-type zinc-finger fold.

This sequence belongs to the AccD/PCCB family. As to quaternary structure, acetyl-CoA carboxylase is a heterohexamer composed of biotin carboxyl carrier protein (AccB), biotin carboxylase (AccC) and two subunits each of ACCase subunit alpha (AccA) and ACCase subunit beta (AccD). Requires Zn(2+) as cofactor.

The protein resides in the cytoplasm. It catalyses the reaction N(6)-carboxybiotinyl-L-lysyl-[protein] + acetyl-CoA = N(6)-biotinyl-L-lysyl-[protein] + malonyl-CoA. It functions in the pathway lipid metabolism; malonyl-CoA biosynthesis; malonyl-CoA from acetyl-CoA: step 1/1. In terms of biological role, component of the acetyl coenzyme A carboxylase (ACC) complex. Biotin carboxylase (BC) catalyzes the carboxylation of biotin on its carrier protein (BCCP) and then the CO(2) group is transferred by the transcarboxylase to acetyl-CoA to form malonyl-CoA. This is Acetyl-coenzyme A carboxylase carboxyl transferase subunit beta from Pseudomonas fluorescens (strain ATCC BAA-477 / NRRL B-23932 / Pf-5).